The sequence spans 392 residues: Putative cystathionine gamma-lyase 2 (392 aa).

Positions 32-55 are disordered; the sequence is LSSTYKQDNPGEPKGHDYSRAGNP. The span at 40-50 shows a compositional bias: basic and acidic residues; the sequence is NPGEPKGHDYS. Residues arginine 51, tyrosine 103, and arginine 108 each contribute to the substrate site. Lysine 203 carries the post-translational modification N6-(pyridoxal phosphate)lysine. A substrate-binding site is contributed by glutamate 330.

This sequence belongs to the trans-sulfuration enzymes family. It depends on pyridoxal 5'-phosphate as a cofactor.

The protein localises to the cytoplasm. The catalysed reaction is L,L-cystathionine + H2O = 2-oxobutanoate + L-cysteine + NH4(+). The protein operates within amino-acid biosynthesis; L-cysteine biosynthesis; L-cysteine from L-homocysteine and L-serine: step 2/2. The sequence is that of Putative cystathionine gamma-lyase 2 (cth-2) from Caenorhabditis elegans.